A 339-amino-acid polypeptide reads, in one-letter code: Anthranilate phosphoribosyltransferase (339 aa).

5-phospho-alpha-D-ribose 1-diphosphate contacts are provided by residues G81, 84–85, S89, 91–94, 109–117, and A121; these read GD, NVSS, and KHGNRALSS. An anthranilate-binding site is contributed by G81. S93 lines the Mg(2+) pocket. Residue N112 coordinates anthranilate. R167 is a binding site for anthranilate. Residues D225 and E226 each contribute to the Mg(2+) site.

Belongs to the anthranilate phosphoribosyltransferase family. Homodimer. It depends on Mg(2+) as a cofactor.

The catalysed reaction is N-(5-phospho-beta-D-ribosyl)anthranilate + diphosphate = 5-phospho-alpha-D-ribose 1-diphosphate + anthranilate. Its pathway is amino-acid biosynthesis; L-tryptophan biosynthesis; L-tryptophan from chorismate: step 2/5. Its function is as follows. Catalyzes the transfer of the phosphoribosyl group of 5-phosphorylribose-1-pyrophosphate (PRPP) to anthranilate to yield N-(5'-phosphoribosyl)-anthranilate (PRA). The sequence is that of Anthranilate phosphoribosyltransferase from Brucella suis biovar 1 (strain 1330).